A 103-amino-acid polypeptide reads, in one-letter code: MYAVFQSGGKQHRVSEGQVVRLEKLELATGATVEFDSXLMVVNGEDVKIGAPVVAGAKVVAEVVAQGRGEKVKIVKFRRRKHSRKQQGHRQWFTEVKITGIQA.

This sequence belongs to the bacterial ribosomal protein bL21 family. Part of the 50S ribosomal subunit. Contacts protein L20.

In terms of biological role, this protein binds to 23S rRNA in the presence of protein L20. This chain is Large ribosomal subunit protein bL21, found in Haemophilus influenzae (strain ATCC 51907 / DSM 11121 / KW20 / Rd).